Reading from the N-terminus, the 204-residue chain is NAD(P)H dehydrogenase (quinone) FQR1 (204 aa).

In terms of domain architecture, Flavodoxin-like spans 5–192 (VYIVYYSMYG…QQAFHQGQYI (188 aa)). Residues 11–15 (SMYGH), 112–165 (IFYS…SPYG), and H136 each bind FMN. Residue Y13 coordinates NAD(+).

The protein belongs to the WrbA family. The cofactor is FMN.

The protein localises to the cell membrane. It carries out the reaction a quinone + NADH + H(+) = a quinol + NAD(+). It catalyses the reaction a quinone + NADPH + H(+) = a quinol + NADP(+). In terms of biological role, catalyzes the transfer of electrons from NADH and NADPH to several quinones in vitro. May act as detoxification enzyme, and protect against auxin-induced oxidative stress. This chain is NAD(P)H dehydrogenase (quinone) FQR1, found in Arabidopsis thaliana (Mouse-ear cress).